Reading from the N-terminus, the 415-residue chain is Runt-related transcription factor 3 (415 aa).

Disordered stretches follow at residues 1–48 (MRIP…GGRA), 176–266 (GPRE…FPDP), and 375–415 (NLMN…WRPY). The Runt domain maps to 54-182 (SMVDVLADHA…TVDGPREPRR (129 aa)). Positions 186 to 205 (KLEDQTKPFPDRFGDLERLR) are enriched in basic and acidic residues. Residue K192 forms a Glycyl lysine isopeptide (Lys-Gly) (interchain with G-Cter in SUMO2) linkage. Residues 209–240 (TPSTPSPRGSLSTTSHFSSQPQTPIQGTSELN) show a composition bias toward polar residues. Phosphoserine is present on S243. Residues 393 to 402 (SHSNSPTALS) are compositionally biased toward polar residues. Residues 406 to 415 (RMDEAVWRPY) are compositionally biased toward basic and acidic residues.

Heterodimer with CBFB. RUNX3 binds DNA as a monomer and through the Runt domain. DNA-binding is increased by heterodimerization. Interacts with TLE1 and SUV39H1. The tyrosine phosphorylated form (via runt domain) interacts with SRC (via protein kinase domain). Interacts with FYN and LCK. Interacts with FOXP3. Interacts with ZFHX3. Interacts with TBX21. Post-translationally, phosphorylated on tyrosine residues by SRC. Phosphorylated by LCK and FYN. In terms of tissue distribution, expressed in gastric cancer tissues (at protein level).

It is found in the nucleus. The protein resides in the cytoplasm. Its function is as follows. Forms the heterodimeric complex core-binding factor (CBF) with CBFB. RUNX members modulate the transcription of their target genes through recognizing the core consensus binding sequence 5'-TGTGGT-3', or very rarely, 5'-TGCGGT-3', within their regulatory regions via their runt domain, while CBFB is a non-DNA-binding regulatory subunit that allosterically enhances the sequence-specific DNA-binding capacity of RUNX. The heterodimers bind to the core site of a number of enhancers and promoters, including murine leukemia virus, polyomavirus enhancer, T-cell receptor enhancers, LCK, IL3 and GM-CSF promoters. May be involved in the control of cellular proliferation and/or differentiation. In association with ZFHX3, up-regulates CDKN1A promoter activity following TGF-beta stimulation. CBF complexes repress ZBTB7B transcription factor during cytotoxic (CD8+) T cell development. They bind to RUNX-binding sequence within the ZBTB7B locus acting as transcriptional silencer and allowing for cytotoxic T cell differentiation. CBF complexes binding to the transcriptional silencer is essential for recruitment of nuclear protein complexes that catalyze epigenetic modifications to establish epigenetic ZBTB7B silencing. Necessary for the development and survival of sensory neurons expressing parvalbumin. The protein is Runt-related transcription factor 3 (RUNX3) of Homo sapiens (Human).